The sequence spans 874 residues: MAKTNSYKKVIAGTMTAAMVAGVVSPVAAAGKSFPDVPAGHWAEDSINYLVDKGAIVGKPDGTYGPTESIDRASAAVIFTKILNLPVDENAQPSFKDAKNLWSSKYIAAVEKAGVVKGDGKDNFYPEGKIDRASFASMLVGAYNLKEKVDGTLVTKFDDLRGHWGEEKANILVNLGISVGTGGKWEPNKSVSRAEAAQFIALTDKKYAKPENSDAKVTNVAATEPTQLTLTGTGLNKLTAEDVTLEGNKAIALEASKDGKSAVVTLSGKIAPNKELPVKVKGNTFIVKYVYEVKKLRVEQLTFDDDRADQAVVFKLNDEKGNADIEYLDIAGHDVKFVANNLDGTPANIFEGGTAESTTGKLAVGIAEGKYKVEVQVTKRGGITVSNTGIIEVKNLDAEATAIKDVVFAVDTDKAGVNYAKPLSGTDFTLNSKTLVAGEKAGIHKVVAQINKENKVVDPSAISLKSSNPGVISVKNGEIKAEAAGSATLTVKVGDVTKTFDFVVKTDTRKLTTVKANPDQLKVVDGKELPVTFVTTDQYGDPFGANSGAIKEVFPQTGVVKVLDVTTTNEGSIGTSSIKVKGENVGAGTIHFQNPNASGEGYGSLHVEVTKSNIGHEAPRLELVSKAGQKGEAADTTLGAGNTVAYQLSNYTTEGVYADAADLAGYEFRVGNDKIASAKIEGKTLKVTGKTAGVTDVILTKDGATAGHATITVTQENIQITSVKFKDVEVEQFENRKVNIDRVLDVVKSDKDDVLNGIKLNISTEHKVRIVDEGTEQGKVYLDRNDNATFDGNDVALGYVTAVKSNDTVSKEGNDLFKFLTDETATNKNDVFKGVTTAFGDKGTVIFKVMKDRVAPTTEYGTKAVTINVIKEEI.

The N-terminal stretch at 1–30 is a signal peptide; sequence MAKTNSYKKVIAGTMTAAMVAGVVSPVAAA. SLH domains follow at residues 31 to 93, 94 to 151, and 152 to 214; these read GKSF…NAQP, SFKD…KVDG, and TLVT…ENSD.

The protein resides in the secreted. It is found in the cell wall. The protein localises to the S-layer. The S-layer is a paracrystalline mono-layered assembly of proteins which coat the surface of bacteria. The sequence is that of S-layer protein from Bacillus licheniformis.